The chain runs to 82 residues: Small ribosomal subunit protein uS17 (82 aa).

It belongs to the universal ribosomal protein uS17 family. Part of the 30S ribosomal subunit.

Its function is as follows. One of the primary rRNA binding proteins, it binds specifically to the 5'-end of 16S ribosomal RNA. This chain is Small ribosomal subunit protein uS17, found in Afipia carboxidovorans (strain ATCC 49405 / DSM 1227 / KCTC 32145 / OM5) (Oligotropha carboxidovorans).